The primary structure comprises 366 residues: UDP-N-acetylglucosamine--N-acetylmuramyl-(pentapeptide) pyrophosphoryl-undecaprenol N-acetylglucosamine transferase (366 aa).

UDP-N-acetyl-alpha-D-glucosamine is bound by residues 10-12 (TGG), Asn-124, Ser-195, and Gln-295.

This sequence belongs to the glycosyltransferase 28 family. MurG subfamily.

It localises to the cell membrane. It catalyses the reaction di-trans,octa-cis-undecaprenyl diphospho-N-acetyl-alpha-D-muramoyl-L-alanyl-D-glutamyl-meso-2,6-diaminopimeloyl-D-alanyl-D-alanine + UDP-N-acetyl-alpha-D-glucosamine = di-trans,octa-cis-undecaprenyl diphospho-[N-acetyl-alpha-D-glucosaminyl-(1-&gt;4)]-N-acetyl-alpha-D-muramoyl-L-alanyl-D-glutamyl-meso-2,6-diaminopimeloyl-D-alanyl-D-alanine + UDP + H(+). It functions in the pathway cell wall biogenesis; peptidoglycan biosynthesis. Functionally, cell wall formation. Catalyzes the transfer of a GlcNAc subunit on undecaprenyl-pyrophosphoryl-MurNAc-pentapeptide (lipid intermediate I) to form undecaprenyl-pyrophosphoryl-MurNAc-(pentapeptide)GlcNAc (lipid intermediate II). This Bacillus licheniformis (strain ATCC 14580 / DSM 13 / JCM 2505 / CCUG 7422 / NBRC 12200 / NCIMB 9375 / NCTC 10341 / NRRL NRS-1264 / Gibson 46) protein is UDP-N-acetylglucosamine--N-acetylmuramyl-(pentapeptide) pyrophosphoryl-undecaprenol N-acetylglucosamine transferase.